A 462-amino-acid chain; its full sequence is GTPase Der (462 aa).

2 EngA-type G domains span residues 2–164 and 195–366; these read KKIA…PKKE and INVA…KNYS. Residues 8–15, 55–59, 116–119, 201–208, 248–252, and 312–315 contribute to the GTP site; these read GKPNVGKS, DTGGI, NKID, GRVNVGKS, DTAGI, and NKWD. The KH-like domain occupies 367 to 451; the sequence is TWLPTGQLNR…PIILRPRKRG (85 aa).

This sequence belongs to the TRAFAC class TrmE-Era-EngA-EngB-Septin-like GTPase superfamily. EngA (Der) GTPase family. In terms of assembly, associates with the 50S ribosomal subunit.

GTPase that plays an essential role in the late steps of ribosome biogenesis. In Nitratiruptor sp. (strain SB155-2), this protein is GTPase Der.